The primary structure comprises 661 residues: Zeaxanthin epoxidase, chloroplastic (661 aa).

Residues 1 to 59 (MLLFRATLLPSPPFFHKTYFSHLSPVIFSDDPLPVSLQRNRVSGCRKQKWRQIRTLALQ) constitute a chloroplast transit peptide. FAD is bound by residues 81-109 (RILI…LVFE) and 359-372 (IFTW…LLGD). The FHA domain maps to 555–609 (HIIGSISHDDSEGISIHLPFPQVHKTHARIACKDNIFYLTDLQSQYGTWITDNEG).

The cofactor is FAD. Expressed in flower buds, lips and leaves. Detected in roots.

The protein resides in the plastid. Its subcellular location is the chloroplast. The catalysed reaction is all-trans-zeaxanthin + 4 reduced [2Fe-2S]-[ferredoxin] + 2 O2 + 4 H(+) = all-trans-violaxanthin + 4 oxidized [2Fe-2S]-[ferredoxin] + 2 H2O. The protein operates within plant hormone biosynthesis; abscisate biosynthesis. Zeaxanthin epoxidase that plays an important role in the xanthophyll cycle and abscisic acid (ABA) biosynthesis. Converts zeaxanthin into antheraxanthin and subsequently violaxanthin. The sequence is that of Zeaxanthin epoxidase, chloroplastic (ZEP) from Oncidium hybrid cultivar (Orchid).